Reading from the N-terminus, the 496-residue chain is Cytochrome P450 3A56 (496 aa).

Cys441 provides a ligand contact to heme.

This sequence belongs to the cytochrome P450 family. Requires heme as cofactor. As to expression, highly expressed in liver and intestine. Moderate expression in gill and spleen. Low expression in kidney, brain and heart.

It is found in the endoplasmic reticulum membrane. It localises to the microsome membrane. The catalysed reaction is an organic molecule + reduced [NADPH--hemoprotein reductase] + O2 = an alcohol + oxidized [NADPH--hemoprotein reductase] + H2O + H(+). In terms of biological role, putative steroid 6-beta-hydroxylase. The chain is Cytochrome P450 3A56 (cyp3a56) from Fundulus heteroclitus (Killifish).